Reading from the N-terminus, the 197-residue chain is MMNRVKIGTALLGLTLAGIALPALAQPQSGPQTGVVFRNTVTGEALDVSQGKEGGRDTPAVKKFLETGENLYIDDKSCLRNGESLFATSCSGCHGHLAEGKLGPGLNDNYWTYPSNTTDVGLFATIFGGANGMMGPHNENLTPDEMLQTIAWIRHLYTGPKQDAVWLNDEQKKAYTPYKQGEVIPKDAKGQCKPLDE.

A signal peptide spans 1–25 (MMNRVKIGTALLGLTLAGIALPALA). Heme c is bound by residues Cys90, Cys93, and His94.

In terms of processing, binds 1 heme c group covalently per subunit.

Its subcellular location is the periplasm. Its function is as follows. Electron acceptor for MDH. Acts in methanol oxidation. In Methylorubrum extorquens (strain ATCC 14718 / DSM 1338 / JCM 2805 / NCIMB 9133 / AM1) (Methylobacterium extorquens), this protein is Cytochrome c-L (moxG).